A 155-amino-acid chain; its full sequence is Transcription antitermination protein NusB (155 aa).

The protein belongs to the NusB family.

Involved in transcription antitermination. Required for transcription of ribosomal RNA (rRNA) genes. Binds specifically to the boxA antiterminator sequence of the ribosomal RNA (rrn) operons. The protein is Transcription antitermination protein NusB of Vibrio campbellii (strain ATCC BAA-1116).